Consider the following 421-residue polypeptide: Leucine-rich repeat-containing protein 42 (421 aa).

LRR repeat units follow at residues 149–170 (VLCS…EEIK), 174–195 (ELTR…LEHL), 202–222 (SVTQ…RKMT), 234–255 (NLTL…GYLF), and 259–280 (KLNC…KDKL). The disordered stretch occupies residues 374–406 (HEPLLSQESKKSKKRAFEESEQEQSSPQSAKQK). Ser399 is subject to Phosphoserine.

It belongs to the LRRC42 family.

The polypeptide is Leucine-rich repeat-containing protein 42 (Lrrc42) (Rattus norvegicus (Rat)).